We begin with the raw amino-acid sequence, 297 residues long: 4-diphosphocytidyl-2-C-methyl-D-erythritol kinase (297 aa).

The active site involves Lys-14. Residue 99 to 109 participates in ATP binding; that stretch reads PVAAGIGGGSA. Asp-141 is an active-site residue.

The protein belongs to the GHMP kinase family. IspE subfamily.

The enzyme catalyses 4-CDP-2-C-methyl-D-erythritol + ATP = 4-CDP-2-C-methyl-D-erythritol 2-phosphate + ADP + H(+). The protein operates within isoprenoid biosynthesis; isopentenyl diphosphate biosynthesis via DXP pathway; isopentenyl diphosphate from 1-deoxy-D-xylulose 5-phosphate: step 3/6. Catalyzes the phosphorylation of the position 2 hydroxy group of 4-diphosphocytidyl-2C-methyl-D-erythritol. The sequence is that of 4-diphosphocytidyl-2-C-methyl-D-erythritol kinase from Bradyrhizobium diazoefficiens (strain JCM 10833 / BCRC 13528 / IAM 13628 / NBRC 14792 / USDA 110).